We begin with the raw amino-acid sequence, 84 residues long: MTDKIRTLQGRVVSDKMEKSIVVAIERFVKHPIYGKFIKRTTKLHVHDENNECGTGDVVEIRECRPLSKTKSWTLVRVVEKAVL.

It belongs to the universal ribosomal protein uS17 family. As to quaternary structure, part of the 30S ribosomal subunit.

Functionally, one of the primary rRNA binding proteins, it binds specifically to the 5'-end of 16S ribosomal RNA. This chain is Small ribosomal subunit protein uS17, found in Citrobacter koseri (strain ATCC BAA-895 / CDC 4225-83 / SGSC4696).